The primary structure comprises 232 residues: Enterobactin synthase component D (232 aa).

The Mg(2+) site is built by D106, E108, and E150.

This sequence belongs to the P-Pant transferase superfamily. EntD family. As to quaternary structure, entB, EntD, EntE, and EntF form a multienzyme complex called enterobactin synthase. It depends on Mg(2+) as a cofactor.

Its subcellular location is the membrane. The enzyme catalyses apo-[aryl-carrier protein] + CoA = holo-[aryl-carrier protein] + adenosine 3',5'-bisphosphate + H(+). It carries out the reaction apo-[peptidyl-carrier protein] + CoA = holo-[peptidyl-carrier protein] + adenosine 3',5'-bisphosphate + H(+). It functions in the pathway siderophore biosynthesis; enterobactin biosynthesis. Its function is as follows. Involved in the biosynthesis of the siderophore enterobactin (enterochelin), which is a macrocyclic trimeric lactone of N-(2,3-dihydroxybenzoyl)-serine. The serine trilactone serves as a scaffolding for the three catechol functionalities that provide hexadentate coordination for the tightly ligated iron(2+) atoms. Plays an essential role in the assembly of the enterobactin by catalyzing the transfer of the 4'-phosphopantetheine (Ppant) moiety from coenzyme A to the apo-domains of both EntB (ArCP domain) and EntF (PCP domain) to yield their holo-forms which make them competent for the activation of 2,3-dihydroxybenzoate (DHB) and L-serine, respectively. In Salmonella austin, this protein is Enterobactin synthase component D.